A 602-amino-acid chain; its full sequence is Sodium- and chloride-dependent GABA transporter 2 (602 aa).

The span at 1–13 (MDSRVSGTTSNGE) shows a compositional bias: polar residues. The tract at residues 1–22 (MDSRVSGTTSNGETKPVYPVME) is disordered. At 1 to 40 (MDSRVSGTTSNGETKPVYPVMEKKEEDGTLERGHWNNKME) the chain is on the cytoplasmic side. Helical transmembrane passes span 41–61 (FVLSVAGEIIGLGNVWRFPYL), 68–88 (GAFFIPYLVFLFTCGIPVFLL), and 121–141 (IVILLNVYYIIVLAWALFYLF). At 142–206 (SSFTIDLPWG…GIQHLGALRW (65 aa)) the chain is on the extracellular side. Cys-153 and Cys-162 form a disulfide bridge. Residue Asn-173 is glycosylated (N-linked (GlcNAc...) asparagine). The next 2 helical transmembrane spans lie at 207 to 227 (ELALCLLLAWVICYFCIWKGV) and 233 to 253 (VVYFTATFPYLMLVVLLIRGV). A glycan (N-linked (GlcNAc...) asparagine) is linked at Asn-269. A run of 7 helical transmembrane segments spans residues 282–302 (AGTQIFFSFAICLGCLTALGS), 319–339 (FLNSGTSFVAGFAIFSILGFM), 366–386 (VVMLPFSPLWACCFFFMVVLL), 418–438 (VLILGVSVVSFLVGLIMLTEG), 453–473 (GMCLLFVAIFESLCVAWVYGA), 490–510 (PLIKYCWLFLTPAVCTATFLF), and 528–548 (WWGDALGWLLALSSMVCIPAW). At 549–602 (SLYRLGTLKGPFRERIRQLMCPAEDLPQRNPAGPSAPATPRTSLLRLTELESHC) the chain is on the cytoplasmic side. Thr-587 carries the phosphothreonine modification. A Phosphoserine modification is found at Ser-591.

This sequence belongs to the sodium:neurotransmitter symporter (SNF) (TC 2.A.22) family. SLC6A13 subfamily. In terms of tissue distribution, expressed in brain, kidney, lung, liver and testis.

It localises to the cell membrane. The protein resides in the basolateral cell membrane. The catalysed reaction is 4-aminobutanoate(out) + chloride(out) + 2 Na(+)(out) = 4-aminobutanoate(in) + chloride(in) + 2 Na(+)(in). The enzyme catalyses taurine(out) + chloride(out) + 2 Na(+)(out) = taurine(in) + chloride(in) + 2 Na(+)(in). It carries out the reaction beta-alanine(out) + chloride(out) + 2 Na(+)(out) = beta-alanine(in) + chloride(in) + 2 Na(+)(in). It catalyses the reaction hypotaurine(out) + chloride(out) + 2 Na(+)(out) = hypotaurine(in) + chloride(in) + 2 Na(+)(in). Its activity is regulated as follows. GABA transport is inhibited by beta-alanine, 2,3-diaminopropionic acid and SNAP-5114. Functionally, mediates sodium- and chloride-dependent transport of gamma-aminobutyric acid (GABA). Mediates transport of beta-alanine. Can also mediate transport of taurine and hypotaurine. This is Sodium- and chloride-dependent GABA transporter 2 (SLC6A13) from Homo sapiens (Human).